Consider the following 127-residue polypeptide: Putative pre-16S rRNA nuclease (127 aa).

This sequence belongs to the YqgF nuclease family.

The protein localises to the cytoplasm. Could be a nuclease involved in processing of the 5'-end of pre-16S rRNA. This is Putative pre-16S rRNA nuclease from Campylobacter jejuni subsp. jejuni serotype O:6 (strain 81116 / NCTC 11828).